A 443-amino-acid chain; its full sequence is Ribosomal protein uS12 methylthiotransferase RimO (443 aa).

The MTTase N-terminal domain maps to 1 to 116 (MKFHLISLGC…IAEYVGKLIA (116 aa)). [4Fe-4S] cluster contacts are provided by Cys10, Cys45, Cys79, Cys154, Cys158, and Cys161. In terms of domain architecture, Radical SAM core spans 140–370 (STPFFRAWVK…LELQQELSTE (231 aa)). In terms of domain architecture, TRAM spans 373-441 (KKYVGTVQKV…QYDLVGGVVS (69 aa)).

It belongs to the methylthiotransferase family. RimO subfamily. Requires [4Fe-4S] cluster as cofactor.

The protein localises to the cytoplasm. The enzyme catalyses L-aspartate(89)-[ribosomal protein uS12]-hydrogen + (sulfur carrier)-SH + AH2 + 2 S-adenosyl-L-methionine = 3-methylsulfanyl-L-aspartate(89)-[ribosomal protein uS12]-hydrogen + (sulfur carrier)-H + 5'-deoxyadenosine + L-methionine + A + S-adenosyl-L-homocysteine + 2 H(+). Catalyzes the methylthiolation of an aspartic acid residue of ribosomal protein uS12. This chain is Ribosomal protein uS12 methylthiotransferase RimO, found in Desulfotalea psychrophila (strain LSv54 / DSM 12343).